A 257-amino-acid polypeptide reads, in one-letter code: Pantothenate synthetase (257 aa).

29-36 (MGNLHAGH) lines the ATP pocket. Residue H36 is the Proton donor of the active site. Q60 is a (R)-pantoate binding site. Residue Q60 participates in beta-alanine binding. Residue 145–148 (GEKD) coordinates ATP. A (R)-pantoate-binding site is contributed by Q151. ATP contacts are provided by residues V174 and 182–185 (LSSR).

This sequence belongs to the pantothenate synthetase family. As to quaternary structure, homodimer.

It is found in the cytoplasm. The enzyme catalyses (R)-pantoate + beta-alanine + ATP = (R)-pantothenate + AMP + diphosphate + H(+). It functions in the pathway cofactor biosynthesis; (R)-pantothenate biosynthesis; (R)-pantothenate from (R)-pantoate and beta-alanine: step 1/1. Catalyzes the condensation of pantoate with beta-alanine in an ATP-dependent reaction via a pantoyl-adenylate intermediate. In Coxiella burnetii (strain CbuK_Q154) (Coxiella burnetii (strain Q154)), this protein is Pantothenate synthetase.